A 121-amino-acid polypeptide reads, in one-letter code: Large ribosomal subunit protein uL22 (121 aa).

It belongs to the universal ribosomal protein uL22 family. As to quaternary structure, part of the 50S ribosomal subunit.

Functionally, this protein binds specifically to 23S rRNA; its binding is stimulated by other ribosomal proteins, e.g. L4, L17, and L20. It is important during the early stages of 50S assembly. It makes multiple contacts with different domains of the 23S rRNA in the assembled 50S subunit and ribosome. The globular domain of the protein is located near the polypeptide exit tunnel on the outside of the subunit, while an extended beta-hairpin is found that lines the wall of the exit tunnel in the center of the 70S ribosome. In Micrococcus luteus (strain ATCC 4698 / DSM 20030 / JCM 1464 / CCM 169 / CCUG 5858 / IAM 1056 / NBRC 3333 / NCIMB 9278 / NCTC 2665 / VKM Ac-2230) (Micrococcus lysodeikticus), this protein is Large ribosomal subunit protein uL22.